Reading from the N-terminus, the 311-residue chain is Probable manganese-dependent inorganic pyrophosphatase (311 aa).

Mn(2+)-binding residues include His9, Asp13, Asp15, Asp77, His99, and Asp151.

Belongs to the PPase class C family. The cofactor is Mn(2+).

The protein localises to the cytoplasm. It carries out the reaction diphosphate + H2O = 2 phosphate + H(+). The protein is Probable manganese-dependent inorganic pyrophosphatase of Streptococcus pyogenes serotype M49 (strain NZ131).